Consider the following 315-residue polypeptide: Lipase 3 (315 aa).

The first 18 residues, 1–18 (MLLKRLGLAALFSLSMVG), serve as a signal peptide directing secretion. A lipid anchor (N-palmitoyl cysteine) is attached at Cys-19. The S-diacylglycerol cysteine moiety is linked to residue Cys-19. In terms of domain architecture, AB hydrolase-1 spans 69–296 (PLLLIHGFGG…MNDVGHVPMV (228 aa)). The active site involves His-74. The active-site Charge relay system is Ser-142.

This sequence belongs to the lipase/esterase LIP3/BchO family.

It is found in the cell membrane. It catalyses the reaction a triacylglycerol + H2O = a diacylglycerol + a fatty acid + H(+). This Moraxella sp. (strain TA144) protein is Lipase 3 (lip3).